Consider the following 221-residue polypeptide: Glutathione S-transferase (221 aa).

Residues 3 to 83 (GKPVLHYANT…YIAGKYNLYG (81 aa)) enclose the GST N-terminal domain. Glutathione is bound by residues Tyr-9, Lys-45, 54 to 55 (QV), and 67 to 68 (QT). The 124-residue stretch at 85-208 (DLKERALIDM…QPGSQRKPRL (124 aa)) folds into the GST C-terminal domain.

Belongs to the GST superfamily. Alpha family. As to quaternary structure, homodimer or heterodimer of GSTA1 and GSTA2.

The enzyme catalyses RX + glutathione = an S-substituted glutathione + a halide anion + H(+). It carries out the reaction prostaglandin A2 + glutathione = prostaglandin A2-S-(R)-glutathione. It catalyses the reaction prostaglandin J2 + glutathione = prostaglandin J2-S-(R)-glutathione. The catalysed reaction is (13S)-hydroperoxy-(9Z,11E)-octadecadienoate + 2 glutathione = (13S)-hydroxy-(9Z,11E)-octadecadienoate + glutathione disulfide + H2O. The enzyme catalyses androst-5-ene-3,17-dione = androst-4-ene-3,17-dione. Its function is as follows. Glutathione S-transferase that catalyzes the nucleophilic attack of the sulfur atom of glutathione on the electrophilic groups of a wide range of exogenous and endogenous compounds. Involved in the formation of glutathione conjugates of both prostaglandin A2 (PGA2) and prostaglandin J2 (PGJ2). It also catalyzes the isomerization of D5-androstene-3,17-dione (AD) into D4-androstene-3,17-dione and may therefore play an important role in hormone biosynthesis. Through its glutathione-dependent peroxidase activity toward the fatty acid hydroperoxide (13S)-hydroperoxy-(9Z,11E)-octadecadienoate/13-HPODE it is also involved in the metabolism of oxidized linoleic acid. This chain is Glutathione S-transferase, found in Gallus gallus (Chicken).